The chain runs to 235 residues: Small ribosomal subunit protein eS4 (235 aa).

Residues 38–99 (VTLLSIIRDY…GESYRVVYND (62 aa)) enclose the S4 RNA-binding domain.

It belongs to the eukaryotic ribosomal protein eS4 family.

This Thermoplasma acidophilum (strain ATCC 25905 / DSM 1728 / JCM 9062 / NBRC 15155 / AMRC-C165) protein is Small ribosomal subunit protein eS4 (rps4e).